We begin with the raw amino-acid sequence, 64 residues long: Large ribosomal subunit protein bL35c (64 aa).

Belongs to the bacterial ribosomal protein bL35 family.

It is found in the plastid. It localises to the chloroplast. The protein is Large ribosomal subunit protein bL35c of Thalassiosira pseudonana (Marine diatom).